Here is a 154-residue protein sequence, read N- to C-terminus: uncharacterized protein (154 aa).

The next 5 helical transmembrane spans lie at T5–L24, F29–A48, P53–A75, I87–V109, and A124–I146.

Its subcellular location is the cell membrane. This is an uncharacterized protein from Archaeoglobus fulgidus (strain ATCC 49558 / DSM 4304 / JCM 9628 / NBRC 100126 / VC-16).